Reading from the N-terminus, the 189-residue chain is Auxin-induced protein IAA4 (189 aa).

The EAR-like (transcriptional repression) motif lies at 8–12 (LRLGL). One can recognise a PB1 domain in the interval 92–179 (GIFVKVSMDG…SCKRLRIMKG (88 aa)).

Belongs to the Aux/IAA family. As to quaternary structure, homodimers and heterodimers. Phosphorylated by phytochrome A in vitro.

The protein localises to the nucleus. Aux/IAA proteins are short-lived transcriptional factors that function as repressors of early auxin response genes at low auxin concentrations. Repression is thought to result from the interaction with auxin response factors (ARFs), proteins that bind to the auxin-responsive promoter element (AuxRE). Formation of heterodimers with ARF proteins may alter their ability to modulate early auxin response genes expression. This Pisum sativum (Garden pea) protein is Auxin-induced protein IAA4 (IAA4/5).